A 338-amino-acid chain; its full sequence is Cytochrome c biogenesis protein CcsA (338 aa).

Helical transmembrane passes span 15–35, 36–56, 71–91, 97–117, 142–162, 246–266, 273–293, and 307–327; these read FLVL…PNIP, GLTG…ATLL, LYES…VAEW, WVGV…ALSL, VMMI…AFLI, IIGL…VWAN, WSWD…AAYL, and AFLA…VNIL.

It belongs to the CcmF/CycK/Ccl1/NrfE/CcsA family. May interact with ccs1.

It localises to the cellular thylakoid membrane. Its function is as follows. Required during biogenesis of c-type cytochromes (cytochrome c6 and cytochrome f) at the step of heme attachment. The sequence is that of Cytochrome c biogenesis protein CcsA from Picosynechococcus sp. (strain ATCC 27264 / PCC 7002 / PR-6) (Agmenellum quadruplicatum).